A 595-amino-acid polypeptide reads, in one-letter code: DNA mismatch repair protein MutL (595 aa).

The protein belongs to the DNA mismatch repair MutL/HexB family.

Functionally, this protein is involved in the repair of mismatches in DNA. It is required for dam-dependent methyl-directed DNA mismatch repair. May act as a 'molecular matchmaker', a protein that promotes the formation of a stable complex between two or more DNA-binding proteins in an ATP-dependent manner without itself being part of a final effector complex. The sequence is that of DNA mismatch repair protein MutL from Endomicrobium trichonymphae.